The chain runs to 306 residues: Ornithine carbamoyltransferase (306 aa).

Carbamoyl phosphate-binding positions include 53–56, Gln80, Arg104, and 131–134; these read STRT and HPCQ. L-ornithine contacts are provided by residues Asn162, Asp219, and 223 to 224; that span reads SM. Carbamoyl phosphate-binding positions include 259 to 260 and Arg287; that span reads CL.

Belongs to the aspartate/ornithine carbamoyltransferase superfamily. OTCase family.

Its subcellular location is the cytoplasm. The catalysed reaction is carbamoyl phosphate + L-ornithine = L-citrulline + phosphate + H(+). Its pathway is amino-acid biosynthesis; L-arginine biosynthesis; L-arginine from L-ornithine and carbamoyl phosphate: step 1/3. Its function is as follows. Reversibly catalyzes the transfer of the carbamoyl group from carbamoyl phosphate (CP) to the N(epsilon) atom of ornithine (ORN) to produce L-citrulline. This Psychrobacter sp. (strain PRwf-1) protein is Ornithine carbamoyltransferase.